Consider the following 122-residue polypeptide: Large ribosomal subunit protein uL14 (122 aa).

The protein belongs to the universal ribosomal protein uL14 family. In terms of assembly, part of the 50S ribosomal subunit. Forms a cluster with proteins L3 and L19. In the 70S ribosome, L14 and L19 interact and together make contacts with the 16S rRNA in bridges B5 and B8.

Its function is as follows. Binds to 23S rRNA. Forms part of two intersubunit bridges in the 70S ribosome. The polypeptide is Large ribosomal subunit protein uL14 (Caldicellulosiruptor saccharolyticus (strain ATCC 43494 / DSM 8903 / Tp8T 6331)).